The chain runs to 245 residues: 5-oxoprolinase subunit A (245 aa).

Belongs to the LamB/PxpA family. As to quaternary structure, forms a complex composed of PxpA, PxpB and PxpC.

It catalyses the reaction 5-oxo-L-proline + ATP + 2 H2O = L-glutamate + ADP + phosphate + H(+). Catalyzes the cleavage of 5-oxoproline to form L-glutamate coupled to the hydrolysis of ATP to ADP and inorganic phosphate. The sequence is that of 5-oxoprolinase subunit A from Neisseria meningitidis serogroup C (strain 053442).